We begin with the raw amino-acid sequence, 333 residues long: Ribosomal RNA small subunit methyltransferase C (333 aa).

This sequence belongs to the methyltransferase superfamily. RsmC family. Monomer.

The protein localises to the cytoplasm. It carries out the reaction guanosine(1207) in 16S rRNA + S-adenosyl-L-methionine = N(2)-methylguanosine(1207) in 16S rRNA + S-adenosyl-L-homocysteine + H(+). Specifically methylates the guanine in position 1207 of 16S rRNA in the 30S particle. The chain is Ribosomal RNA small subunit methyltransferase C from Chromohalobacter salexigens (strain ATCC BAA-138 / DSM 3043 / CIP 106854 / NCIMB 13768 / 1H11).